The sequence spans 344 residues: Methionine import ATP-binding protein MetN (344 aa).

In terms of domain architecture, ABC transporter spans 2 to 241; that stretch reads IEINQVNKVF…PKTELAHDFI (240 aa). ATP is bound at residue 38-45; that stretch reads GSSGAGKS.

The protein belongs to the ABC transporter superfamily. Methionine importer (TC 3.A.1.24) family. In terms of assembly, the complex is composed of two ATP-binding proteins (MetN), two transmembrane proteins (MetI) and a solute-binding protein (MetQ).

The protein resides in the cell inner membrane. It carries out the reaction L-methionine(out) + ATP + H2O = L-methionine(in) + ADP + phosphate + H(+). It catalyses the reaction D-methionine(out) + ATP + H2O = D-methionine(in) + ADP + phosphate + H(+). In terms of biological role, part of the ABC transporter complex MetNIQ involved in methionine import. Responsible for energy coupling to the transport system. This is Methionine import ATP-binding protein MetN from Vibrio vulnificus (strain CMCP6).